Consider the following 198-residue polypeptide: DnaJ homolog subfamily C member 12 (198 aa).

An N-acetylmethionine modification is found at Met1. In terms of domain architecture, J spans 14–79 (DYYTLLGCDE…ESRARYDHWR (66 aa)). A disordered region spans residues 121-183 (TNTAQNKERS…CGHLHFRWSG (63 aa)). Positions 126 to 156 (NKERSEQRETKQGDPDSTPEKMMQKESESPE) are enriched in basic and acidic residues. Phosphoserine occurs at positions 160, 166, and 182.

Interacts with HSPA8. Interacts with TPH1. Interacts with TPH2.

It is found in the cytoplasm. Its function is as follows. Probable co-chaperone that participates in the proper folding of biopterin-dependent aromatic amino acid hydroxylases, which include phenylalanine-4-hydroxylase (PAH), tyrosine 3-monooxygenase (TH) and peripheral and neuronal tryptophan hydroxylases (TPH1 and TPH2). The sequence is that of DnaJ homolog subfamily C member 12 (Dnajc12) from Rattus norvegicus (Rat).